The following is a 247-amino-acid chain: 2,3-bisphosphoglycerate-dependent phosphoglycerate mutase (247 aa).

Residues 8 to 15 (RHGESQWN), 21 to 22 (TG), arginine 60, 87 to 90 (ERHY), lysine 98, 114 to 115 (RR), and 183 to 184 (GN) each bind substrate. Histidine 9 functions as the Tele-phosphohistidine intermediate in the catalytic mechanism. The active-site Proton donor/acceptor is the glutamate 87.

This sequence belongs to the phosphoglycerate mutase family. BPG-dependent PGAM subfamily.

It carries out the reaction (2R)-2-phosphoglycerate = (2R)-3-phosphoglycerate. Its pathway is carbohydrate degradation; glycolysis; pyruvate from D-glyceraldehyde 3-phosphate: step 3/5. Its function is as follows. Catalyzes the interconversion of 2-phosphoglycerate and 3-phosphoglycerate. The polypeptide is 2,3-bisphosphoglycerate-dependent phosphoglycerate mutase (Chlorobium phaeobacteroides (strain BS1)).